Here is a 386-residue protein sequence, read N- to C-terminus: uncharacterized protein (386 aa).

9 helical membrane-spanning segments follow: residues 48 to 68 (NLIT…MLVY), 78 to 98 (PSWV…FDAI), 136 to 156 (LQLD…YFYI), 171 to 191 (YFSG…LTAI), 213 to 233 (FLPY…ALLL), 253 to 273 (VIKA…VFSL), 285 to 305 (FLTI…VVIV), 316 to 336 (WNVL…FGVL), and 344 to 364 (FFCY…HVIA).

It belongs to the CDP-alcohol phosphatidyltransferase class-I family.

The protein resides in the membrane. This is an uncharacterized protein from Schizosaccharomyces pombe (strain 972 / ATCC 24843) (Fission yeast).